The following is a 364-amino-acid chain: Developmentally-regulated GTP-binding protein 2 homolog (364 aa).

The 226-residue stretch at 63-288 (ARVALIGFPS…LLDKIWDYLN (226 aa)) folds into the OBG-type G domain. GTP is bound by residues 69–76 (GFPSVGKS), 115–119 (DTPGI), and 246–249 (NKMD). The region spanning 288–363 (NLVRVYTKLR…EDEDVIQIVK (76 aa)) is the TGS domain.

It belongs to the TRAFAC class OBG-HflX-like GTPase superfamily. OBG GTPase family.

In Dictyostelium discoideum (Social amoeba), this protein is Developmentally-regulated GTP-binding protein 2 homolog (drg2).